The chain runs to 359 residues: 3-dehydroquinate synthase (359 aa).

Residues Asp-70 to Lys-75, Gly-105 to Asp-109, Thr-129 to Thr-130, Lys-142, Lys-151, and Phe-169 to Thr-172 each bind NAD(+). Zn(2+) is bound by residues Glu-184, His-247, and His-264.

It belongs to the sugar phosphate cyclases superfamily. Dehydroquinate synthase family. It depends on Co(2+) as a cofactor. Zn(2+) serves as cofactor. NAD(+) is required as a cofactor.

Its subcellular location is the cytoplasm. The enzyme catalyses 7-phospho-2-dehydro-3-deoxy-D-arabino-heptonate = 3-dehydroquinate + phosphate. It participates in metabolic intermediate biosynthesis; chorismate biosynthesis; chorismate from D-erythrose 4-phosphate and phosphoenolpyruvate: step 2/7. Its function is as follows. Catalyzes the conversion of 3-deoxy-D-arabino-heptulosonate 7-phosphate (DAHP) to dehydroquinate (DHQ). The chain is 3-dehydroquinate synthase from Francisella tularensis subsp. mediasiatica (strain FSC147).